Here is a 185-residue protein sequence, read N- to C-terminus: Ribosome-recycling factor (185 aa).

It belongs to the RRF family.

It is found in the cytoplasm. Its function is as follows. Responsible for the release of ribosomes from messenger RNA at the termination of protein biosynthesis. May increase the efficiency of translation by recycling ribosomes from one round of translation to another. The chain is Ribosome-recycling factor from Laribacter hongkongensis (strain HLHK9).